Here is a 427-residue protein sequence, read N- to C-terminus: UDP-N-acetylglucosamine--N-acetylmuramyl-(pentapeptide) pyrophosphoryl-undecaprenol N-acetylglucosamine transferase (427 aa).

UDP-N-acetyl-alpha-D-glucosamine is bound by residues 29–31 (TGG), Asn-141, Arg-177, Ser-205, Ile-258, and Gln-303. The disordered stretch occupies residues 408-427 (SLHPIPDSRFPIRTSAGGAQ).

It belongs to the glycosyltransferase 28 family. MurG subfamily.

The protein localises to the cell inner membrane. It catalyses the reaction di-trans,octa-cis-undecaprenyl diphospho-N-acetyl-alpha-D-muramoyl-L-alanyl-D-glutamyl-meso-2,6-diaminopimeloyl-D-alanyl-D-alanine + UDP-N-acetyl-alpha-D-glucosamine = di-trans,octa-cis-undecaprenyl diphospho-[N-acetyl-alpha-D-glucosaminyl-(1-&gt;4)]-N-acetyl-alpha-D-muramoyl-L-alanyl-D-glutamyl-meso-2,6-diaminopimeloyl-D-alanyl-D-alanine + UDP + H(+). Its pathway is cell wall biogenesis; peptidoglycan biosynthesis. Cell wall formation. Catalyzes the transfer of a GlcNAc subunit on undecaprenyl-pyrophosphoryl-MurNAc-pentapeptide (lipid intermediate I) to form undecaprenyl-pyrophosphoryl-MurNAc-(pentapeptide)GlcNAc (lipid intermediate II). This Xanthomonas campestris pv. campestris (strain B100) protein is UDP-N-acetylglucosamine--N-acetylmuramyl-(pentapeptide) pyrophosphoryl-undecaprenol N-acetylglucosamine transferase.